We begin with the raw amino-acid sequence, 368 residues long: MTAIIELNNLSVQFHQKGRLVTAVKNATLHIEKGDIYGVIGYSGAGKSTLVRTINLLQKPTEGQIVINGEKIFDSENPVKFTGAKLREFRQKIGMIFQHFNLLSEKTVFNNVAFALQHSQIEDKNGKKRYLTKKEKNDKVTELLKLVDLADLSDKYPAQLSGGQKQRVAIARALANDPEILISDEGTSALDPKTTNQILDLLKSLHEKLGITVVLITHEMQVVKEIANKVAVMQNGEIIEQNSLIDIFAQPKEALTKQFIETTSSVNRFIASLSKTELLAQLADDEELIHLDYSGSELEDPVVSDITKKFDVTTNIFYGNVELLQGQPFGSLVLTLKGSSEHRAAAKAYFVERHLKFEVLGKIERTVD.

An ABC transporter domain is found at 5–260 (IELNNLSVQF…PKEALTKQFI (256 aa)). Residue 41-48 (GYSGAGKS) participates in ATP binding.

It belongs to the ABC transporter superfamily. Methionine importer (TC 3.A.1.24) family. In terms of assembly, the complex is composed of two ATP-binding proteins (MetN), two transmembrane proteins (MetI) and a solute-binding protein (MetQ).

The protein localises to the cell membrane. It carries out the reaction L-methionine(out) + ATP + H2O = L-methionine(in) + ADP + phosphate + H(+). The catalysed reaction is D-methionine(out) + ATP + H2O = D-methionine(in) + ADP + phosphate + H(+). Functionally, part of the ABC transporter complex MetNIQ involved in methionine import. Responsible for energy coupling to the transport system. The polypeptide is Methionine import ATP-binding protein MetN (Lactococcus lactis subsp. cremoris (strain MG1363)).